The chain runs to 440 residues: D-serine dehydratase (440 aa).

Lys-116 is subject to N6-(pyridoxal phosphate)lysine.

It belongs to the serine/threonine dehydratase family. DsdA subfamily. As to quaternary structure, monomer. Requires pyridoxal 5'-phosphate as cofactor.

It carries out the reaction D-serine = pyruvate + NH4(+). The chain is D-serine dehydratase from Salmonella schwarzengrund (strain CVM19633).